The sequence spans 280 residues: 2-dehydro-3-deoxyphosphooctonate aldolase (280 aa).

The protein belongs to the KdsA family.

It is found in the cytoplasm. The enzyme catalyses D-arabinose 5-phosphate + phosphoenolpyruvate + H2O = 3-deoxy-alpha-D-manno-2-octulosonate-8-phosphate + phosphate. The protein operates within carbohydrate biosynthesis; 3-deoxy-D-manno-octulosonate biosynthesis; 3-deoxy-D-manno-octulosonate from D-ribulose 5-phosphate: step 2/3. It functions in the pathway bacterial outer membrane biogenesis; lipopolysaccharide biosynthesis. In Neisseria meningitidis serogroup B (strain ATCC BAA-335 / MC58), this protein is 2-dehydro-3-deoxyphosphooctonate aldolase.